A 465-amino-acid polypeptide reads, in one-letter code: uncharacterized protein (465 aa).

11 consecutive transmembrane segments (helical) span residues 19–39 (VLGPAHVWALGVGIVLVGEYM), 50–70 (MIAGLMACWVAGLLYTCVAMI), 91–111 (IVGPLMAFNVGLFLVMAYTML), 140–160 (FIVLAIMFLAWLNYRGVLATL), 164–184 (LVITAIAFLAIVALFVSVQFG), 201–221 (PYGWVGIVASLHFGLWYYLGI), 244–264 (AGIMTLLIAATMTWYICSGLM), 288–308 (LMVLLFVGTAFATLASANGCI), 342–362 (IVFLVPIALIFALGAPLDQVV), 363–383 (TFSILSGLLGYTFMTFNMVMF), and 403–423 (LPTVVLLILCSTAYFAVFLGY).

It belongs to the amino acid-polyamine-organocation (APC) superfamily.

The protein localises to the cell membrane. Its function is as follows. Probable amino-acid or metabolite transport protein. This is an uncharacterized protein from Rhizobium meliloti (strain 1021) (Ensifer meliloti).